We begin with the raw amino-acid sequence, 254 residues long: Sec-independent protein translocase protein TatC (254 aa).

6 helical membrane passes run 40-60, 82-104, 125-145, 172-192, 210-230, and 233-253; these read IFLSLGAVLVGVVACFIFVKP, FFFVSVKVAGYSGILVMSPFILY, VVLGSSVLFFAGLGFAYYALI, FVLLLMFSTGLAFQIPIIQVV, FVILGAMVLGAILTPSTDPLT, and LLAGAVLGLYFGGIGCVRLLG.

This sequence belongs to the TatC family. Forms a complex with TatA.

The protein localises to the cell inner membrane. Functionally, part of the twin-arginine translocation (Tat) system that transports large folded proteins containing a characteristic twin-arginine motif in their signal peptide across membranes. The chain is Sec-independent protein translocase protein TatC from Synechocystis sp. (strain ATCC 27184 / PCC 6803 / Kazusa).